The following is a 156-amino-acid chain: Methylated-DNA--protein-cysteine methyltransferase (156 aa).

The Nucleophile; methyl group acceptor role is filled by Cys120.

Belongs to the MGMT family.

The protein resides in the cytoplasm. It catalyses the reaction a 6-O-methyl-2'-deoxyguanosine in DNA + L-cysteinyl-[protein] = S-methyl-L-cysteinyl-[protein] + a 2'-deoxyguanosine in DNA. The catalysed reaction is a 4-O-methyl-thymidine in DNA + L-cysteinyl-[protein] = a thymidine in DNA + S-methyl-L-cysteinyl-[protein]. In terms of biological role, involved in the cellular defense against the biological effects of O6-methylguanine (O6-MeG) and O4-methylthymine (O4-MeT) in DNA. Repairs the methylated nucleobase in DNA by stoichiometrically transferring the methyl group to a cysteine residue in the enzyme. This is a suicide reaction: the enzyme is irreversibly inactivated. In Metallosphaera sedula (strain ATCC 51363 / DSM 5348 / JCM 9185 / NBRC 15509 / TH2), this protein is Methylated-DNA--protein-cysteine methyltransferase.